Consider the following 378-residue polypeptide: MTKVVVGLSGGVDSAVAAFLLKKQGYLVEAVFMRNWDSNLNFDIQGNPTLNDICSQELDYKDSLKVSEQLGIKLHRVDFIEEYWQKVFMSFIKAFENNLTPNPDILCNNEIKFRAFIEYATTKLAPQYIAMGHYANIIYETSSDQKLVPRLACAVDQNKDQTYFLSQLTTKQLQNILFPLGNLTKQEVRQIALENNLINATKKDSTGICFIGERNFFQFLSNYLPAQKGDIKTLDGTFLAHHKGVMYYTIGQRKNLGLGDVPSQKPWFVVGKHLPTNTLYVEQGSTHPYLYSDKALIGDIVWRGKKTNLHLQAKMRYRQPNQDVILTWLDQNNLEIHYPQTIKAVTPGQICAFYDKNICCGAGVIKEVYFQGTKRLYT.

ATP is bound by residues 7-14 and Met-33; that span reads GLSGGVDS. The interval 102-104 is interaction with target base in tRNA; sequence NPD. The active-site Nucleophile is the Cys-107. Cysteines 107 and 209 form a disulfide. Position 132 (Gly-132) interacts with ATP. The interaction with tRNA stretch occupies residues 159 to 161; it reads KDQ. Cys-209 functions as the Cysteine persulfide intermediate in the catalytic mechanism. The tract at residues 316-317 is interaction with tRNA; sequence RY.

This sequence belongs to the MnmA/TRMU family.

It is found in the cytoplasm. The catalysed reaction is S-sulfanyl-L-cysteinyl-[protein] + uridine(34) in tRNA + AH2 + ATP = 2-thiouridine(34) in tRNA + L-cysteinyl-[protein] + A + AMP + diphosphate + H(+). In terms of biological role, catalyzes the 2-thiolation of uridine at the wobble position (U34) of tRNA, leading to the formation of s(2)U34. The protein is tRNA-specific 2-thiouridylase MnmA of Onion yellows phytoplasma (strain OY-M).